The following is a 362-amino-acid chain: Transcription factor Sox-7 (362 aa).

Positions 21-41 (EDLSDGLSPHRSPREKGSETR) are disordered. A compositionally biased stretch (basic and acidic residues) spans 32–41 (SPREKGSETR). Residues 42 to 110 (IRRPMNAFMV…QHMQDYPNYK (69 aa)) constitute a DNA-binding region (HMG box). The Sox C-terminal domain maps to 245–362 (QTGSSMIPPV…ATYYNSYSVS (118 aa)).

In terms of tissue distribution, expressed in the embryonic pronephric sinus as well as posterior cardinal veins.

It localises to the nucleus. In terms of biological role, transcription factor. Binds to the DNA sequence 5'-AACAAT-3'. Acts downstream of vegt and upstream of nodal signaling to promote endodermal and mesodermal differentiation by promoting vegt-induced expression of both endodermal genes (including endodermin) and mesodermal genes (including snai1/snail and snai2/slug). Induces expression of multiple nodal genes (including nodal, nodal2, nodal4, nodal5 and nodal6) and binds directly to sites within the promoter of the nodal5 gene. The endodermal and mesodermal specification pathways then interact to initiate cardiogenesis. Acts partially redundantly with sox18 during cardiogenesis. Also acts as an antagonist of beta-catenin signaling. Regulates (possibly indirectly) development of the pronephros, the functional larval kidney. The sequence is that of Transcription factor Sox-7 from Xenopus tropicalis (Western clawed frog).